Reading from the N-terminus, the 86-residue chain is Cell division topological specificity factor (86 aa).

It belongs to the MinE family.

Functionally, prevents the cell division inhibition by proteins MinC and MinD at internal division sites while permitting inhibition at polar sites. This ensures cell division at the proper site by restricting the formation of a division septum at the midpoint of the long axis of the cell. The chain is Cell division topological specificity factor from Rhizobium johnstonii (strain DSM 114642 / LMG 32736 / 3841) (Rhizobium leguminosarum bv. viciae).